Consider the following 122-residue polypeptide: Large ribosomal subunit protein uL14c (122 aa).

This sequence belongs to the universal ribosomal protein uL14 family. Part of the 50S ribosomal subunit.

It localises to the plastid. Its subcellular location is the chloroplast. In terms of biological role, binds to 23S rRNA. The chain is Large ribosomal subunit protein uL14c from Chlamydomonas reinhardtii (Chlamydomonas smithii).